The chain runs to 273 residues: Ribosomal RNA small subunit methyltransferase A (273 aa).

Positions 18, 20, 45, 66, 91, and 113 each coordinate S-adenosyl-L-methionine.

The protein belongs to the class I-like SAM-binding methyltransferase superfamily. rRNA adenine N(6)-methyltransferase family. RsmA subfamily.

It is found in the cytoplasm. It catalyses the reaction adenosine(1518)/adenosine(1519) in 16S rRNA + 4 S-adenosyl-L-methionine = N(6)-dimethyladenosine(1518)/N(6)-dimethyladenosine(1519) in 16S rRNA + 4 S-adenosyl-L-homocysteine + 4 H(+). Its function is as follows. Specifically dimethylates two adjacent adenosines (A1518 and A1519) in the loop of a conserved hairpin near the 3'-end of 16S rRNA in the 30S particle. May play a critical role in biogenesis of 30S subunits. This chain is Ribosomal RNA small subunit methyltransferase A, found in Shigella dysenteriae serotype 1 (strain Sd197).